The sequence spans 252 residues: Endonuclease NucS (252 aa).

This sequence belongs to the NucS endonuclease family.

The protein resides in the cytoplasm. In terms of biological role, cleaves both 3' and 5' ssDNA extremities of branched DNA structures. The protein is Endonuclease NucS of Sulfurisphaera tokodaii (strain DSM 16993 / JCM 10545 / NBRC 100140 / 7) (Sulfolobus tokodaii).